A 773-amino-acid polypeptide reads, in one-letter code: Photosystem I P700 chlorophyll a apoprotein A1 (773 aa).

Residues Met1–Asp27 form a disordered region. 8 helical membrane passes run Ile80–Ala103, Leu166–His189, Leu205–Ala229, Ile315–Trp333, Trp375–Tyr398, Leu414–Ile440, Ala462–His484, and Leu564–Leu582. [4Fe-4S] cluster-binding residues include Cys606 and Cys615. 2 consecutive transmembrane segments (helical) span residues His622–Trp643 and Ile687–Phe709. Residue His698 coordinates divinylchlorophyll a'. Positions 706 and 714 each coordinate divinyl chlorophyll a. Trp715 serves as a coordination point for phylloquinone. The helical transmembrane segment at Ala747 to Ala767 threads the bilayer.

This sequence belongs to the PsaA/PsaB family. The PsaA/B heterodimer binds the P700 divinyl chlorophyll special pair and subsequent electron acceptors. PSI consists of a core antenna complex that captures photons, and an electron transfer chain that converts photonic excitation into a charge separation. The cyanobacterial PSI reaction center is composed of one copy each of PsaA,B,C,D,E,F,I,J,K,L,M and X, and forms trimeric complexes. PSI electron transfer chain: 5 divinyl chlorophyll a, 1 divinyl chlorophyll a', 2 phylloquinones and 3 4Fe-4S clusters. PSI core antenna: 90 divinyl chlorophyll a, 22 carotenoids, 3 phospholipids and 1 galactolipid. P700 is a divinyl chlorophyll a/divinyl chlorophyll a' dimer, A0 is one or more divinylchlorophyll a, A1 is one or both phylloquinones and FX is a shared 4Fe-4S iron-sulfur center. is required as a cofactor.

Its subcellular location is the cellular thylakoid membrane. The enzyme catalyses reduced [plastocyanin] + hnu + oxidized [2Fe-2S]-[ferredoxin] = oxidized [plastocyanin] + reduced [2Fe-2S]-[ferredoxin]. Its function is as follows. PsaA and PsaB bind P700, the primary electron donor of photosystem I (PSI), as well as the electron acceptors A0, A1 and FX. PSI is a plastocyanin/cytochrome c6-ferredoxin oxidoreductase, converting photonic excitation into a charge separation, which transfers an electron from the donor P700 chlorophyll pair to the spectroscopically characterized acceptors A0, A1, FX, FA and FB in turn. Oxidized P700 is reduced on the lumenal side of the thylakoid membrane by plastocyanin or cytochrome c6. In Prochlorococcus marinus (strain SARG / CCMP1375 / SS120), this protein is Photosystem I P700 chlorophyll a apoprotein A1.